The chain runs to 218 residues: Uracil-DNA glycosylase (218 aa).

Aspartate 59 functions as the Proton acceptor in the catalytic mechanism.

This sequence belongs to the uracil-DNA glycosylase (UDG) superfamily. UNG family.

Its subcellular location is the cytoplasm. It catalyses the reaction Hydrolyzes single-stranded DNA or mismatched double-stranded DNA and polynucleotides, releasing free uracil.. Its function is as follows. Excises uracil residues from the DNA which can arise as a result of misincorporation of dUMP residues by DNA polymerase or due to deamination of cytosine. The protein is Uracil-DNA glycosylase of Staphylococcus aureus (strain MSSA476).